The sequence spans 480 residues: Phosphoglucosamine mutase (480 aa).

A disordered region spans residues 1–41; it reads MPKHTKKDPREGAPSATGEPQKQAAGRKLFGTDGVRGVANQ. Serine 127 serves as the catalytic Phosphoserine intermediate. 4 residues coordinate Mg(2+): serine 127, aspartate 269, aspartate 271, and aspartate 273. Serine 127 carries the phosphoserine modification.

The protein belongs to the phosphohexose mutase family. It depends on Mg(2+) as a cofactor. Activated by phosphorylation.

The catalysed reaction is alpha-D-glucosamine 1-phosphate = D-glucosamine 6-phosphate. Functionally, catalyzes the conversion of glucosamine-6-phosphate to glucosamine-1-phosphate. The chain is Phosphoglucosamine mutase from Sorangium cellulosum (strain So ce56) (Polyangium cellulosum (strain So ce56)).